A 394-amino-acid chain; its full sequence is Isopentenyl-diphosphate delta-isomerase (394 aa).

10–11 (RK) lines the substrate pocket. FMN contacts are provided by residues T67, 68–70 (GMT), S101, and N129. A substrate-binding site is contributed by 101 to 103 (SQR). Q168 lines the substrate pocket. E169 provides a ligand contact to Mg(2+). FMN is bound by residues K200, S225, T230, 279-281 (GMR), and 300-301 (AL).

This sequence belongs to the IPP isomerase type 2 family. In terms of assembly, homooctamer. Dimer of tetramers. It depends on FMN as a cofactor. The cofactor is NADPH. Requires Mg(2+) as cofactor.

The protein resides in the cytoplasm. The catalysed reaction is isopentenyl diphosphate = dimethylallyl diphosphate. Its function is as follows. Involved in the biosynthesis of isoprenoids. Catalyzes the 1,3-allylic rearrangement of the homoallylic substrate isopentenyl (IPP) to its allylic isomer, dimethylallyl diphosphate (DMAPP). The sequence is that of Isopentenyl-diphosphate delta-isomerase from Pyrococcus furiosus (strain ATCC 43587 / DSM 3638 / JCM 8422 / Vc1).